Here is a 144-residue protein sequence, read N- to C-terminus: uncharacterized protein (144 aa).

Over residues 125–135 (PQQQNNHQLQS) the composition is skewed to polar residues. Residues 125–144 (PQQQNNHQLQSKPKAASISR) are disordered.

This is an uncharacterized protein from Rickettsia prowazekii (strain Madrid E).